The primary structure comprises 389 residues: Teichoic acid glycerol-phosphate transferase (389 aa).

Belongs to the CDP-glycerol glycerophosphotransferase family.

It is found in the cell membrane. It carries out the reaction 4-O-[(2R)-glycerylphospho]-N-acetyl-beta-D-mannosaminyl-(1-&gt;4)-N-acetyl-alpha-D-glucosaminyl di-trans,octa-cis-undecaprenyl diphosphate + CDP-glycerol = 4-O-[di(2R)-glycerylphospho]-N-acetyl-beta-D-mannosaminyl-(1-&gt;4)-N-acetyl-alpha-D-glucosaminyl di-trans,octa-cis-undecaprenyl diphosphate + CMP + H(+). Its pathway is cell wall biogenesis; poly(ribitol phosphate) teichoic acid biosynthesis. Functionally, catalyzes the addition of a second glycerol phosphate unit from CDP-glycerol to the prenolpyrophosphate-linked disaccharide, to complete the linkage unit. The chain is Teichoic acid glycerol-phosphate transferase (tarF) from Staphylococcus aureus (strain NCTC 8325 / PS 47).